Consider the following 128-residue polypeptide: Nucleoside diphosphate kinase B (128 aa).

Met-1 carries the N-acetylmethionine modification. Residues Lys-9, Phe-39, Thr-70, Arg-81, and Asn-91 each coordinate ATP. His-94 functions as the Pros-phosphohistidine intermediate in the catalytic mechanism.

This sequence belongs to the NDK family. It depends on Mg(2+) as a cofactor.

It is found in the cytoplasm. Its subcellular location is the nucleus. The protein localises to the cell projection. It localises to the lamellipodium. The protein resides in the ruffle. It catalyses the reaction a 2'-deoxyribonucleoside 5'-diphosphate + ATP = a 2'-deoxyribonucleoside 5'-triphosphate + ADP. It carries out the reaction a ribonucleoside 5'-diphosphate + ATP = a ribonucleoside 5'-triphosphate + ADP. Major role in the synthesis of nucleoside triphosphates other than ATP. The sequence is that of Nucleoside diphosphate kinase B (nme2) from Merluccius australis australis (Austral hake).